The following is a 333-amino-acid chain: L-lactate dehydrogenase B chain (333 aa).

Residues 29–57 (GQVG…LEDK) and R99 each bind NAD(+). Substrate-binding residues include R106, N138, and R169. N138 is a binding site for NAD(+). H193 (proton acceptor) is an active-site residue. Position 248 (T248) interacts with substrate.

The protein belongs to the LDH/MDH superfamily. LDH family. In terms of assembly, homotetramer.

The protein localises to the cytoplasm. It catalyses the reaction (S)-lactate + NAD(+) = pyruvate + NADH + H(+). The protein operates within fermentation; pyruvate fermentation to lactate; (S)-lactate from pyruvate: step 1/1. In terms of biological role, interconverts simultaneously and stereospecifically pyruvate and lactate with concomitant interconversion of NADH and NAD(+). The protein is L-lactate dehydrogenase B chain (LDHB) of Caiman crocodilus apaporiensis (Rio Apaporis caiman).